Reading from the N-terminus, the 319-residue chain is ATP-dependent 6-phosphofructokinase (319 aa).

Glycine 11 serves as a coordination point for ATP. 21-25 (RAVTR) contributes to the ADP binding site. Residues 72-73 (RF) and 102-105 (GDGS) contribute to the ATP site. Mg(2+) is bound at residue aspartate 103. A substrate-binding site is contributed by 125–127 (SID). Aspartate 127 serves as the catalytic Proton acceptor. Arginine 154 is a binding site for ADP. Residues arginine 162 and 169-171 (MGR) each bind substrate. Residues 185-187 (GAD) and 213-215 (KKH) contribute to the ADP site. Substrate contacts are provided by residues glutamate 222, arginine 243, and 249–252 (HMQR).

It belongs to the phosphofructokinase type A (PFKA) family. ATP-dependent PFK group I subfamily. Prokaryotic clade 'B1' sub-subfamily. As to quaternary structure, homotetramer. It depends on Mg(2+) as a cofactor.

Its subcellular location is the cytoplasm. It catalyses the reaction beta-D-fructose 6-phosphate + ATP = beta-D-fructose 1,6-bisphosphate + ADP + H(+). It participates in carbohydrate degradation; glycolysis; D-glyceraldehyde 3-phosphate and glycerone phosphate from D-glucose: step 3/4. Its activity is regulated as follows. Allosterically activated by ADP and other diphosphonucleosides, and allosterically inhibited by phosphoenolpyruvate. Its function is as follows. Catalyzes the phosphorylation of D-fructose 6-phosphate to fructose 1,6-bisphosphate by ATP, the first committing step of glycolysis. In Lactobacillus johnsonii (strain CNCM I-12250 / La1 / NCC 533), this protein is ATP-dependent 6-phosphofructokinase.